We begin with the raw amino-acid sequence, 1308 residues long: Transposon TX1 uncharacterized 149 kDa protein (1308 aa).

Residues 494–765 (EAFKKGELPL…KIIKYLGVYL (272 aa)) enclose the Reverse transcriptase domain.

In Xenopus laevis (African clawed frog), this protein is Transposon TX1 uncharacterized 149 kDa protein.